Reading from the N-terminus, the 343-residue chain is Probable magnesium transporter NIPA4 (343 aa).

The Extracellular segment spans residues 1–18 (MAESSGSWRDSYKGMSSD). A helical membrane pass occupies residues 19 to 39 (NIKGLVLALSSSLFIGASFIV). Over 40–66 (KKKGLKKAASTGTRAGVGGYSYLYEPL) the chain is Cytoplasmic. The chain crosses the membrane as a helical span at residues 67 to 87 (WWIGMTTMLLGEIANFAAYAF). Residues 88 to 90 (APA) lie on the Extracellular side of the membrane. Residues 91–111 (ILVTPLGAVSIIISAVLAHII) form a helical membrane-spanning segment. Over 112-115 (LREK) the chain is Cytoplasmic. A helical transmembrane segment spans residues 116–136 (LHIFGILGCALCVVGSTTIVL). The Extracellular segment spans residues 137-157 (HAPQEREIDSVIEVWNLATEP). Residues 158–178 (AFMFYASLVIGAAVFLIIRFV) form a helical membrane-spanning segment. Topologically, residues 179–189 (PQYGQTNVMVY) are cytoplasmic. Residues 190-210 (IGICSLVGSLSVMSVKALGIA) form a helical membrane-spanning segment. The Extracellular portion of the chain corresponds to 211 to 220 (LKLTFSGTNQ). Residues 221–241 (LFYPQTWIFTLVVLTCVVTQL) traverse the membrane as a helical segment. Topologically, residues 242 to 254 (NYLNKALDTFNTA) are cytoplasmic. Residues 255 to 275 (IVSPIYYVMFTSLTILASVIM) form a helical membrane-spanning segment. Topologically, residues 276–283 (FKDWDRQN) are extracellular. The chain crosses the membrane as a helical span at residues 284–304 (GTQIVTEICGFVTILSGTFLL). The Cytoplasmic segment spans residues 305-343 (HRTKDMVEGSSVILPLRISKHINEEEGIPLRRQESLRSP).

It belongs to the NIPA (TC 2.A.7) family. Homodimer.

It localises to the cell membrane. It is found in the early endosome. In terms of biological role, acts as a Mg(2+) transporter. Can also transport other divalent cations such as Fe(2+), Sr(2+), Ba(2+), Mn(2+) and Co(2+) but to a much less extent than Mg(2+). This chain is Probable magnesium transporter NIPA4, found in Arabidopsis thaliana (Mouse-ear cress).